Consider the following 369-residue polypeptide: Phenylalanine--tRNA ligase alpha subunit (369 aa).

E270 contributes to the Mg(2+) binding site.

The protein belongs to the class-II aminoacyl-tRNA synthetase family. Phe-tRNA synthetase alpha subunit type 1 subfamily. Tetramer of two alpha and two beta subunits. It depends on Mg(2+) as a cofactor.

The protein localises to the cytoplasm. The enzyme catalyses tRNA(Phe) + L-phenylalanine + ATP = L-phenylalanyl-tRNA(Phe) + AMP + diphosphate + H(+). The protein is Phenylalanine--tRNA ligase alpha subunit of Phenylobacterium zucineum (strain HLK1).